The sequence spans 76 residues: Small ribosomal subunit protein bS18 (76 aa).

It belongs to the bacterial ribosomal protein bS18 family. In terms of assembly, part of the 30S ribosomal subunit. Forms a tight heterodimer with protein bS6.

Binds as a heterodimer with protein bS6 to the central domain of the 16S rRNA, where it helps stabilize the platform of the 30S subunit. This is Small ribosomal subunit protein bS18 from Stutzerimonas stutzeri (strain A1501) (Pseudomonas stutzeri).